The sequence spans 639 residues: Protein phosphatase 2C 35 (639 aa).

Residues glycine 227–leucine 630 form the PPM-type phosphatase domain. Mn(2+) contacts are provided by aspartate 262 and glycine 263. The segment at glutamine 295 to arginine 341 is disordered. Residues serine 308–glutamine 320 are compositionally biased toward polar residues. The span at arginine 323 to proline 332 shows a compositional bias: basic residues. Residues aspartate 558 and aspartate 621 each contribute to the Mn(2+) site.

Belongs to the PP2C family. Interacts with XA21 (via juxtamembrane and kinase domains). Requires Mg(2+) as cofactor. Mn(2+) serves as cofactor.

It is found in the cell membrane. The enzyme catalyses O-phospho-L-seryl-[protein] + H2O = L-seryl-[protein] + phosphate. The catalysed reaction is O-phospho-L-threonyl-[protein] + H2O = L-threonyl-[protein] + phosphate. In terms of biological role, protein phosphatase that acts on XA21 pathogen recognition receptor. Negatively regulates cell death and XA21-mediated innate immunity. The polypeptide is Protein phosphatase 2C 35 (XB15) (Oryza sativa subsp. japonica (Rice)).